Here is a 566-residue protein sequence, read N- to C-terminus: 3-oxosteroid 1-dehydrogenase (566 aa).

10 to 39 (DVVVVGSGAAGMVAALVAAHRGLSTVVVEK) contacts FAD.

This sequence belongs to the FAD-dependent oxidoreductase 2 family. 3-oxosteroid dehydrogenase subfamily. FAD is required as a cofactor.

It catalyses the reaction a 3-oxosteroid + A = a 3-oxo-Delta(1)-steroid + AH2. The enzyme catalyses a 3-oxo-Delta(4)-steroid + A = a 3-oxo-Delta(1,4)-steroid + AH2. Functionally, involved in the degradation of cholesterol. Catalyzes the elimination of the C-1 and C-2 hydrogen atoms of the A-ring from the polycyclic ring structure of 3-ketosteroids. Is also involved in the formation of 3-keto-1,4-diene-steroid from 3-keto-4-ene-steroid. The chain is 3-oxosteroid 1-dehydrogenase (kstD) from Mycobacterium tuberculosis (strain CDC 1551 / Oshkosh).